Consider the following 979-residue polypeptide: Mast/stem cell growth factor receptor Kit (979 aa).

The first 24 residues, 1–24 (MRGARGAWDLLCVLLVLLRGQTAT), serve as a signal peptide directing secretion. Topologically, residues 25-527 (SQPSASPGEP…QIQAHTLFTP (503 aa)) are extracellular. 3 Ig-like C2-type domains span residues 31 to 117 (PGEP…DPAK), 126 to 210 (FGKE…AAIK), and 217 to 315 (VPET…EKGF). 4 cysteine pairs are disulfide-bonded: Cys58–Cys98, Cys137–Cys187, Cys152–Cys184, and Cys234–Cys293. Asn146 carries an N-linked (GlcNAc...) asparagine glycan. N-linked (GlcNAc...) asparagine glycosylation is found at Asn296, Asn303, Asn323, Asn355, Asn370, Asn466, and Asn489. 2 Ig-like C2-type domains span residues 324 to 417 (TTVF…TKPE) and 420 to 514 (TYDR…FKGN). Cysteines 431 and 494 form a disulfide. A helical transmembrane segment spans residues 528–548 (LLIGFVVAAGAMGIIVMVLTY). Residues 549-979 (KYLQKPMYEV…TQPLLVHEDA (431 aa)) are Cytoplasmic-facing. Phosphotyrosine; by autocatalysis occurs at positions 550 and 556. Residue Tyr571 participates in Mg(2+) binding. Phosphotyrosine occurs at positions 571 and 573. Residues 571 to 573 (YVY) form an important for interaction with phosphotyrosine-binding proteins region. In terms of domain architecture, Protein kinase spans 592–939 (LSFGKTLGAG…ISDSTKHIYS (348 aa)). ATP contacts are provided by residues 599 to 606 (GAGAFGKV), Lys626, and 674 to 680 (EYCCYGD). Position 706 is a phosphotyrosine (Tyr706). Ser720 carries the phosphoserine modification. A phosphotyrosine; by autocatalysis mark is found at Tyr723 and Tyr732. 2 positions are modified to phosphoserine; by PKC/PRKCA: Ser743 and Ser748. The active-site Proton acceptor is the Asp794. Arg798 serves as a coordination point for ATP. Mg(2+)-binding residues include Asn799 and Asp812. A Phosphoserine modification is found at Ser823. Tyr825 carries the post-translational modification Phosphotyrosine; by autocatalysis. The residue at position 893 (Ser893) is a Phosphoserine. Phosphotyrosine; by autocatalysis is present on Tyr902. At Tyr938 the chain carries Phosphotyrosine. A Phosphoserine modification is found at Ser962.

The protein belongs to the protein kinase superfamily. Tyr protein kinase family. CSF-1/PDGF receptor subfamily. In terms of assembly, monomer in the absence of bound KITLG/SCF. Homodimer in the presence of bound KITLG/SCF, forming a heterotetramer with two KITLG/SCF molecules. Interacts (via phosphorylated tyrosine residues) with the adapter proteins GRB2 and GRB7 (via SH2 domain), and SH2B2/APS. Interacts (via C-terminus) with MPDZ (via the tenth PDZ domain). Interacts (via phosphorylated tyrosine residues) with the protein phosphatases PTPN6/SHP-1 (via SH2 domain), PTPN11/SHP-2 (via SH2 domain) and PTPRU. Interacts with DOK1 and TEC. Interacts with the protein kinase FES/FPS. Interacts with PLCG1. Interacts (via phosphorylated tyrosine residues) with PIK3R1 and PIK3 catalytic subunit. Interacts (KITLG/SCF-bound) with IL1RL1. Interacts with IL1RAP (independent of stimulation with KITLG/SCF). A mast cell-specific KITLG/SCF-induced interleukin-33 signaling complex contains IL1RL1, IL1RAP, KIT and MYD88. Post-translationally, ubiquitinated by SOCS6. KIT is rapidly ubiquitinated after autophosphorylation induced by KITLG/SCF binding, leading to internalization and degradation. In terms of processing, autophosphorylated on tyrosine residues. KITLG/SCF binding promotes autophosphorylation of isoform 1 and isoform 2. Isoform 1 shows low levels of tyrosine phosphorylation in the absence of added KITLG/SCF, while isoform 2 requires stimulation by KITLG/SCF for phosphorylation (in vitro). Phosphorylation of Tyr-573 is required for interaction with PTPN6/SHP-1. Phosphorylation of Tyr-571 is required for interaction with PTPN11/SHP-2. Phosphorylated tyrosine residues are important for interaction with specific binding partners. In terms of tissue distribution, isoform 1 and isoform 2 are detected in bone marrow cells, spermatogonia and spermatocytes, but not in round spermatids, elongating spermatids and spermatozoa. Isoform 3 is detected in round spermatids, elongating spermatids and spermatozoa, but not in spermatogonia and spermatocytes (at protein level). Isoform 1 is widely expressed and detected in fetal liver and bone marrow. Isoform 3 is detected in bone marrow cells enriched in hematopoietic stem cells.

Its subcellular location is the cell membrane. It localises to the cytoplasm. It catalyses the reaction L-tyrosyl-[protein] + ATP = O-phospho-L-tyrosyl-[protein] + ADP + H(+). Its activity is regulated as follows. Present in an inactive conformation in the absence of bound ligand. KITLG/SCF binding leads to dimerization and activation by autophosphorylation. In terms of biological role, tyrosine-protein kinase that acts as a cell-surface receptor for the cytokine KITLG/SCF and plays an essential role in the regulation of cell survival and proliferation, hematopoiesis, stem cell maintenance, gametogenesis, mast cell development, migration and function, and in melanogenesis. In response to KITLG/SCF binding, KIT can activate several signaling pathways. Phosphorylates PIK3R1, PLCG1, SH2B2/APS and CBL. Activates the AKT1 signaling pathway by phosphorylation of PIK3R1, the regulatory subunit of phosphatidylinositol 3-kinase. Activated KIT also transmits signals via GRB2 and activation of RAS, RAF1 and the MAP kinases MAPK1/ERK2 and/or MAPK3/ERK1. Promotes activation of STAT family members STAT1, STAT3, STAT5A and STAT5B. Activation of PLCG1 leads to the production of the cellular signaling molecules diacylglycerol and inositol 1,4,5-trisphosphate. KIT signaling is modulated by protein phosphatases, and by rapid internalization and degradation of the receptor. Activated KIT promotes phosphorylation of the protein phosphatases PTPN6/SHP-1 and PTPRU, and of the transcription factors STAT1, STAT3, STAT5A and STAT5B. Promotes phosphorylation of PIK3R1, CBL, CRK (isoform Crk-II), LYN, MAPK1/ERK2 and/or MAPK3/ERK1, PLCG1, SRC and SHC1. This Mus musculus (Mouse) protein is Mast/stem cell growth factor receptor Kit (Kit).